The sequence spans 395 residues: Acid ceramidase (395 aa).

An N-terminal signal peptide occupies residues 1-21; it reads MLGRSRLTFVLLSVTVTCSVA. A disulfide bond links cysteine 31 and cysteine 340. The Nucleophile role is filled by cysteine 143. N-linked (GlcNAc...) asparagine glycosylation is found at asparagine 173, asparagine 259, asparagine 342, and asparagine 348. A disulfide bridge links cysteine 388 with cysteine 392.

The protein belongs to the acid ceramidase family. Heterodimer; disulfide-linked. The heterodimer is composed of the disulfide-linked alpha and beta chains produced by autocatalytic cleavage of the precursor. In terms of processing, N-glycosylated. Proteolytically cleaved into two chains alpha and beta that remain associated via a disulfide bond. Cleavage gives rise to a conformation change that activates the enzyme. The same catalytic Cys residue mediates the autoproteolytic cleavage and subsequent hydrolysis of lipid substrates. The beta chain may undergo an additional C-terminal processing.

The protein localises to the lysosome. Its subcellular location is the secreted. The enzyme catalyses an N-acylsphing-4-enine + H2O = sphing-4-enine + a fatty acid. It carries out the reaction N-dodecanoylsphing-4-enine + H2O = dodecanoate + sphing-4-enine. It catalyses the reaction N-tetradecanoylsphing-4-enine + H2O = tetradecanoate + sphing-4-enine. The catalysed reaction is N-hexadecanoylsphing-4-enine + H2O = sphing-4-enine + hexadecanoate. The enzyme catalyses N-octadecanoylsphing-4-enine + H2O = sphing-4-enine + octadecanoate. It carries out the reaction N-dodecanoyl-(4R)-hydroxysphinganine + H2O = (4R)-hydroxysphinganine + dodecanoate. It catalyses the reaction N-(dodecanoyl)-sphinganine + H2O = dodecanoate + sphinganine. The catalysed reaction is N-(acetyl)-sphing-4-enine + H2O = sphing-4-enine + acetate. The enzyme catalyses N-(hexanoyl)sphing-4-enine + H2O = hexanoate + sphing-4-enine. It carries out the reaction N-octanoylsphing-4-enine + H2O = octanoate + sphing-4-enine. It catalyses the reaction N-(9Z-octadecenoyl)-sphing-4-enine + H2O = sphing-4-enine + (9Z)-octadecenoate. The catalysed reaction is N-dodecanoylethanolamine + H2O = dodecanoate + ethanolamine. It functions in the pathway lipid metabolism; sphingolipid metabolism. Its function is as follows. Lysosomal ceramidase that hydrolyzes sphingolipid ceramides into sphingosine and free fatty acids at acidic pH. Ceramides, sphingosine, and its phosphorylated form sphingosine-1-phosphate are bioactive lipids that mediate cellular signaling pathways regulating several biological processes including cell proliferation, apoptosis and differentiation. Has a higher catalytic efficiency towards C12-ceramides versus other ceramides. Also catalyzes the reverse reaction allowing the synthesis of ceramides from fatty acids and sphingosine. For the reverse synthetic reaction, the natural sphingosine D-erythro isomer is more efficiently utilized as a substrate compared to D-erythro-dihydrosphingosine and D-erythro-phytosphingosine, while the fatty acids with chain lengths of 12 or 14 carbons are the most efficiently used. Also has an N-acylethanolamine hydrolase activity. By regulating the levels of ceramides, sphingosine and sphingosine-1-phosphate in the epidermis, mediates the calcium-induced differentiation of epidermal keratinocytes. Also indirectly regulates tumor necrosis factor/TNF-induced apoptosis. By regulating the intracellular balance between ceramides and sphingosine, in adrenocortical cells, probably also acts as a regulator of steroidogenesis. In Balaenoptera acutorostrata scammoni (North Pacific minke whale), this protein is Acid ceramidase.